Consider the following 123-residue polypeptide: Large ribosomal subunit protein bL12 (123 aa).

Belongs to the bacterial ribosomal protein bL12 family. In terms of assembly, homodimer. Part of the ribosomal stalk of the 50S ribosomal subunit. Forms a multimeric L10(L12)X complex, where L10 forms an elongated spine to which 2 to 4 L12 dimers bind in a sequential fashion. Binds GTP-bound translation factors.

Its function is as follows. Forms part of the ribosomal stalk which helps the ribosome interact with GTP-bound translation factors. Is thus essential for accurate translation. This Psychrobacter arcticus (strain DSM 17307 / VKM B-2377 / 273-4) protein is Large ribosomal subunit protein bL12.